A 498-amino-acid chain; its full sequence is Capsanthin/capsorubin synthase, chromoplastic (498 aa).

The transit peptide at 1 to 52 (METLLKPFPSPLLSIPTPNMYSFKHNSTFPNPTKQKDSRKFHYRNKSSTHFC) directs the protein to the chromoplast. 84–112 (VIIIGTGPAGLRLAEQVSKYGIKVCCVDP) provides a ligand contact to NAD(+). The FLEET motif signature appears at 293-297 (FLEET).

This sequence belongs to the lycopene cyclase family. In terms of assembly, monomer. Requires FAD as cofactor. The cofactor is NADPH.

Its subcellular location is the plastid. It localises to the chromoplast. It catalyses the reaction all-trans-violaxanthin = all-trans-capsorubin. The enzyme catalyses all-trans-antheraxanthin = all-trans-capsanthin. The catalysed reaction is all-trans-violaxanthin = (5R,6S)-5,6-epoxi-capsanthin. It carries out the reaction (5R,6S)-5,6-epoxi-capsanthin = all-trans-capsorubin. Its pathway is carotenoid biosynthesis; capsanthin biosynthesis; capsanthin from antheraxanthin: step 1/1. The protein operates within carotenoid biosynthesis; capsorubin biosynthesis; capsorubin from violaxanthin: step 1/1. In terms of biological role, catalyzes the conversion of the ubiquitous 5,6-epoxycarotenoids, antheraxanthin and violaxanthin, into capsanthin and capsorubin, respectively. The chain is Capsanthin/capsorubin synthase, chromoplastic from Capsicum annuum (Capsicum pepper).